A 1486-amino-acid polypeptide reads, in one-letter code: MAANVGSMFQYWKRFDLRRLQKELNSVASELSARQEESEHSHKHLIELRREFKKNVPEEIREMVAPVLKSFQAEVVALSKRSQEAEAAFLSVYKQLIEAPDPVPVFEAARSLDDRLQPPSFDPSGQPRRDLHTSWKRNPELLSPKEQREGTSPAGPTLTEGSRLPGIPGKALLTETLLQRNEAEKQKGLQEVQITLAARLGEAEEKIKVLHSALKATQAELLELRRKYDEEAASKADEVGLIMTNLEKANQRAEAAQREVESLREQLASVNSSIRLACCSPQGPSGDKVNFTLCSGPRLEAALASKDREILRLLKDVQHLQSSLQELEEASANQIADLERQLTAKSEAIEKLEEKLQAQSDYEEIKTELSILKAMKLASSTCSLPQGMAKPEDSLLIAKEAFFPTQKFLLEKPSLLASPEEDPSEDDSIKDSLGTEQSYPSPQQLPPPPGPEDPLSPSPGQPLLGPSLGPDGTRTFSLSPFPSLASGERLMMPPAAFKGEAGGLLVFPPAFYGAKPPTAPATPAPGPEPLGGPEPADGGGGGAAGPGAEEEQLDTAEIAFQVKEQLLKHNIGQRVFGHYVLGLSQGSVSEILARPKPWRKLTVKGKEPFIKMKQFLSDEQNVLALRTIQVRQRGSITPRIRTPETGSDDAIKSILEQAKKEIESQKGGEPKTSVAPLSIANGTTPASTSEDAIKSILEQARREMQAQQQALLEMEVAPRGRSVPPSPPERPSLATASQNGAPALVKQEEGSGGPAQAPLPVLSPAAFVQSIIRKVKSEIGDAGYFDHHWASDRGLLSRPYASVSPSLSSSSSSGYSGQPNGRAWPRGDEAPVPPEDEAAAGAEDEPPRTGELKAEGATAEAGARLPYYPAYVPRTLKPTVPPLTPEQYELYMYREVDTLELTRQVKEKLAKNGICQRIFGEKVLGLSQGSVSDMLSRPKPWSKLTQKGREPFIRMQLWLSDQLGQAVGQQPGASQASPTEPRSSPSPPPSPTEPEKSSQEPLSLSLESSKENQQPEGRSSSSLSGKMYSGSQAPGGIQEIVAMSPELDTYSITKRVKEVLTDNNLGQRLFGESILGLTQGSVSDLLSRPKPWHKLSLKGREPFVRMQLWLNDPHNVEKLRDMKKLEKKAYLKRRYGLISTGSDSESPATRSECPSPCLQPQDLSLLQIKKPRVVLAPEEKEALRKAYQLEPYPSQQTIELLSFQLNLKTNTVINWFHNYRSRMRREMLVEGTQDEPDLDPSGGPGILPPGHSHPDPTPQSPDSETEDQKPTVKELELQEGPEENSTPLTTQDKAQVRIKQEQMEEDAEEEAGSQPQDSGELDKGQGPPKEEHPDPPGNDGLPKVAPGPLLPGGSTPDCPSLHPQQESEAGERLHPDPLSFKSASESSRCSLEVSLNSPSAASSPGLMMSVSPVPSSSAPISPSPPGAPPAKVPSASPTADMAGALHPSAKVNPNLQRRHEKMANLNNIIYRVERAANREEALEWEF.

Positions 114–167 (DRLQPPSFDPSGQPRRDLHTSWKRNPELLSPKEQREGTSPAGPTLTEGSRLPGI) are disordered. Basic and acidic residues predominate over residues 127–149 (PRRDLHTSWKRNPELLSPKEQRE). S143 carries the post-translational modification Phosphoserine. Residues 195–374 (TLAARLGEAE…IKTELSILKA (180 aa)) are a coiled coil. 6 disordered regions span residues 415–481 (LLAS…LSPF), 517–549 (PTAP…PGAE), 661–690 (EIES…STSE), 716–758 (VAPR…AQAP), 800–858 (YASV…EGAT), and 964–1032 (GQAV…SGSQ). A compositionally biased stretch (acidic residues) spans 419–428 (PEEDPSEDDS). A compositionally biased stretch (pro residues) spans 443 to 460 (QQLPPPPGPEDPLSPSPG). A compositionally biased stretch (low complexity) spans 461-470 (QPLLGPSLGP). The span at 517–532 (PTAPATPAPGPEPLGG) shows a compositional bias: pro residues. Residues 544–631 (AGPGAEEEQL…VLALRTIQVR (88 aa)) constitute a DNA-binding region (CUT 1). Residues 680–690 (ANGTTPASTSE) show a composition bias toward polar residues. Residues 690-717 (EDAIKSILEQARREMQAQQQALLEMEVA) adopt a coiled-coil conformation. Residues 802–816 (SVSPSLSSSSSSGYS) show a composition bias toward low complexity. The segment covering 834-844 (PEDEAAAGAED) has biased composition (acidic residues). Basic and acidic residues predominate over residues 845–854 (EPPRTGELKA). Positions 887 to 974 (QYELYMYREV…QAVGQQPGAS (88 aa)) form a DNA-binding region, CUT 2. Residues 967 to 976 (VGQQPGASQA) are compositionally biased toward polar residues. A compositionally biased stretch (low complexity) spans 1017–1031 (GRSSSSLSGKMYSGS). A DNA-binding region (CUT 3) is located at residues 1038-1125 (QEIVAMSPEL…VEKLRDMKKL (88 aa)). Positions 1168–1227 (IKKPRVVLAPEEKEALRKAYQLEPYPSQQTIELLSFQLNLKTNTVINWFHNYRSRMRREM) form a DNA-binding region, homeobox. The interval 1231 to 1453 (GTQDEPDLDP…ALHPSAKVNP (223 aa)) is disordered. Positions 1266 to 1276 (EDQKPTVKELE) are enriched in basic and acidic residues. Positions 1283 to 1293 (ENSTPLTTQDK) are enriched in polar residues. Positions 1320 to 1334 (ELDKGQGPPKEEHPD) are enriched in basic and acidic residues. Residues 1381–1401 (KSASESSRCSLEVSLNSPSAA) show a composition bias toward polar residues. Positions 1402-1420 (SSPGLMMSVSPVPSSSAPI) are enriched in low complexity. The segment covering 1421–1431 (SPSPPGAPPAK) has biased composition (pro residues).

The protein belongs to the CUT homeobox family.

The protein resides in the nucleus. Transcription factor involved in the control of neuronal proliferation and differentiation in the brain. Regulates dendrite development and branching, dendritic spine formation, and synaptogenesis in cortical layers II-III. Binds to DNA in a sequence-specific manner. The sequence is that of Homeobox protein cut-like 2 (CUX2) from Homo sapiens (Human).